We begin with the raw amino-acid sequence, 203 residues long: Urease accessory protein UreG (203 aa).

GTP is bound at residue 14-21 (GPVGSGKT).

The protein belongs to the SIMIBI class G3E GTPase family. UreG subfamily. As to quaternary structure, homodimer. UreD, UreF and UreG form a complex that acts as a GTP-hydrolysis-dependent molecular chaperone, activating the urease apoprotein by helping to assemble the nickel containing metallocenter of UreC. The UreE protein probably delivers the nickel.

Its subcellular location is the cytoplasm. Functionally, facilitates the functional incorporation of the urease nickel metallocenter. This process requires GTP hydrolysis, probably effectuated by UreG. The sequence is that of Urease accessory protein UreG from Sinorhizobium fredii (strain NBRC 101917 / NGR234).